A 219-amino-acid polypeptide reads, in one-letter code: ATP-dependent dethiobiotin synthetase BioD (219 aa).

14 to 19 (DVGKTY) serves as a coordination point for ATP. Thr18 provides a ligand contact to Mg(2+). Lys37 is an active-site residue. Residue Ser41 participates in substrate binding. Residues Asp54, 114–117 (EGAG), and 175–176 (NN) each bind ATP. Mg(2+)-binding residues include Asp54 and Glu114.

It belongs to the dethiobiotin synthetase family. As to quaternary structure, homodimer. The cofactor is Mg(2+).

The protein resides in the cytoplasm. It carries out the reaction (7R,8S)-7,8-diammoniononanoate + CO2 + ATP = (4R,5S)-dethiobiotin + ADP + phosphate + 3 H(+). It participates in cofactor biosynthesis; biotin biosynthesis; biotin from 7,8-diaminononanoate: step 1/2. In terms of biological role, catalyzes a mechanistically unusual reaction, the ATP-dependent insertion of CO2 between the N7 and N8 nitrogen atoms of 7,8-diaminopelargonic acid (DAPA, also called 7,8-diammoniononanoate) to form a ureido ring. The protein is ATP-dependent dethiobiotin synthetase BioD of Fusobacterium nucleatum subsp. nucleatum (strain ATCC 25586 / DSM 15643 / BCRC 10681 / CIP 101130 / JCM 8532 / KCTC 2640 / LMG 13131 / VPI 4355).